The chain runs to 87 residues: Small polypeptide DEVIL 11 (87 aa).

Residues 1–11 (MASSSSLTRSG) show a composition bias toward polar residues. Residues 1–47 (MASSSSLTRSGSVHLDEKWKLSKKDGGASRITRSSSTSSSSFNGKKQ) form a disordered region. Positions 14-27 (HLDEKWKLSKKDGG) are enriched in basic and acidic residues. Positions 29 to 41 (SRITRSSSTSSSS) are enriched in low complexity. The interval 51–82 (AFTRKCARLVKEQRARFYIMRRCVIMLICWRD) is required for DVL/RTFL small polypeptide activity. Residues 64 to 80 (RARFYIMRRCVIMLICW) traverse the membrane as a helical segment. A glycan (N-linked (GlcNAc...) asparagine) is linked at Asn-83.

The protein belongs to the DVL/RTFL small polypeptides family.

Its subcellular location is the cell membrane. Its function is as follows. Small polypeptide acting as a regulatory molecule which coordinates cellular responses required for differentiation, growth and development, probably by restricting polar cell proliferation in lateral organs and coordinating socket cell recruitment and differentiation at trichome sites. This Arabidopsis thaliana (Mouse-ear cress) protein is Small polypeptide DEVIL 11.